Consider the following 555-residue polypeptide: Urocanate hydratase (555 aa).

Residues 52–53 (GG), Gln130, 176–178 (GMG), Glu196, Arg201, 242–243 (NA), 263–267 (QTSAH), 273–274 (YL), and Tyr322 each bind NAD(+). Cys410 is a catalytic residue. Gly492 serves as a coordination point for NAD(+).

It belongs to the urocanase family. NAD(+) is required as a cofactor.

The protein resides in the cytoplasm. It catalyses the reaction 4-imidazolone-5-propanoate = trans-urocanate + H2O. The protein operates within amino-acid degradation; L-histidine degradation into L-glutamate; N-formimidoyl-L-glutamate from L-histidine: step 2/3. Its function is as follows. Catalyzes the conversion of urocanate to 4-imidazolone-5-propionate. The protein is Urocanate hydratase of Shewanella sp. (strain W3-18-1).